Consider the following 78-residue polypeptide: Large ribosomal subunit protein bL28 (78 aa).

A disordered region spans residues Met-1–Thr-25.

The protein belongs to the bacterial ribosomal protein bL28 family.

This Aliivibrio salmonicida (strain LFI1238) (Vibrio salmonicida (strain LFI1238)) protein is Large ribosomal subunit protein bL28.